The sequence spans 170 residues: Large ribosomal subunit protein uL15 (170 aa).

Residues 1 to 12 (MKLHDLRPAEGS) show a composition bias toward basic and acidic residues. A disordered region spans residues 1-50 (MKLHDLRPAEGSHRKRKRIGRGHGSGKVKTGGKGMMGQKARSGPGPYRTF). Residues 13–26 (HRKRKRIGRGHGSG) are compositionally biased toward basic residues.

The protein belongs to the universal ribosomal protein uL15 family. In terms of assembly, part of the 50S ribosomal subunit.

Binds to the 23S rRNA. This chain is Large ribosomal subunit protein uL15, found in Chloroflexus aggregans (strain MD-66 / DSM 9485).